The sequence spans 372 residues: Segmentation polarity homeobox protein engrailed (372 aa).

Disordered stretches follow at residues methionine 1–glutamine 35, tyrosine 47–threonine 112, glutamate 196–proline 246, and aspartate 261–alanine 286. Basic and acidic residues-rich tracts occupy residues aspartate 79–arginine 105 and arginine 197–aspartate 215. The span at serine 216–serine 244 shows a compositional bias: low complexity. Positions glutamate 280–serine 339 form a DNA-binding region, homeobox.

This sequence belongs to the engrailed homeobox family. Expressed in the middle silk gland but not in the posterior silk gland during the fourth molt/fifth intermolt period.

It localises to the nucleus. Its function is as follows. This protein might be involved in the compartmentalization of the silk gland. This Bombyx mori (Silk moth) protein is Segmentation polarity homeobox protein engrailed (en).